Reading from the N-terminus, the 833-residue chain is Probable glucan 1,3-beta-glucosidase D (833 aa).

Over residues 1-33 (MPTHSRSRDRYGGRDSDREARYDYDYARRRYAT) the composition is skewed to basic and acidic residues. The segment at 1–228 (MPTHSRSRDR…RKRQKKLAVV (228 aa)) is disordered. Over 1 to 305 (MPTHSRSRDR…GGRPFWKRKR (305 aa)) the chain is Cytoplasmic. The segment covering 34 to 45 (DDDDDYDDDELE) has biased composition (acidic residues). Basic and acidic residues-rich tracts occupy residues 46–75 (HDLT…RDAE) and 97–172 (YGDD…ETAA). Low complexity predominate over residues 183–196 (SASHLLSADALAKL). The segment covering 200 to 217 (YEKEERRKREIAKDAAKA) has biased composition (basic and acidic residues). A helical; Signal-anchor for type II membrane protein membrane pass occupies residues 306-326 (WIGLGALIIILVIVIPVAVVV). Residues 327 to 833 (SKKHDNKSDP…PDFGDLPEYY (507 aa)) are Extracellular-facing. The interval 331-353 (DNKSDPADSQGTSPGKSNLDGLS) is disordered. An N-linked (GlcNAc...) asparagine glycan is attached at Asn-332. Positions 337–346 (ADSQGTSPGK) are enriched in polar residues. Residues Asn-378, Asn-383, Asn-395, Asn-548, Asn-560, and Asn-569 are each glycosylated (N-linked (GlcNAc...) asparagine). The Proton donor role is filled by Glu-599. N-linked (GlcNAc...) asparagine glycosylation is found at Asn-638, Asn-671, and Asn-691. Glu-704 functions as the Nucleophile in the catalytic mechanism.

This sequence belongs to the glycosyl hydrolase 5 (cellulase A) family.

Its subcellular location is the cell membrane. The enzyme catalyses Successive hydrolysis of beta-D-glucose units from the non-reducing ends of (1-&gt;3)-beta-D-glucans, releasing alpha-glucose.. In terms of biological role, glucosidase involved in the degradation of cellulosic biomass. Active on lichenan. The polypeptide is Probable glucan 1,3-beta-glucosidase D (exgD) (Aspergillus fumigatus (strain CBS 144.89 / FGSC A1163 / CEA10) (Neosartorya fumigata)).